A 388-amino-acid polypeptide reads, in one-letter code: MGLLRLLVLCTLAACCMARSPPAPPLPQRPLSPLHPLGCNDSEVLAVAGFALQNINRDQKDGYMLSLNRVHDVREHYQEDMGSLFYLTLDVLETDCHVLSRKAQKDCKPRMFYESVYGQCKAMFHINKPRRVLYLPAYNCTLRPVSKRKTHTTCPDCPSPIDLSNPSALEAATESLAKFNSKSPSKKYELVKVTKAMNQWVSGPAYYVEYLIKEAPCTKSQASCSLQHSDSEPVGICQGSTVQSSLRHVPLIQPVEKSVTVTCEFFESQAQVPGDENPAVTQGPQKLPQKNTAPTSSPSVTAPRGSIQHLPELDDEKPEESKGGSPEEAFPVQLDLTTNPQGDTLDVSFLYLEPGDKKLVVLPFPGKEQRSAECPGPEKENNPLVLPP.

The N-terminal stretch at 1–18 (MGLLRLLVLCTLAACCMA) is a signal peptide. Cystatin fetuin-B-type domains follow at residues 28–141 (QRPL…YNCT) and 152–264 (TTCP…VTCE). N40 is a glycosylation site (N-linked (GlcNAc...) asparagine). 5 disulfide bridges follow: C96–C107, C120–C140, C154–C157, C217–C224, and C237–C263. The N-linked (GlcNAc...) asparagine glycan is linked to N139. Disordered regions lie at residues 270 to 343 (AQVP…PQGD) and 367 to 388 (KEQR…VLPP). Residues 279–300 (AVTQGPQKLPQKNTAPTSSPSV) show a composition bias toward polar residues. O-linked (GalNAc...) threonine glycans are attached at residues T292 and T295. S321 is subject to Phosphoserine. Positions 367-381 (KEQRSAECPGPEKEN) are enriched in basic and acidic residues.

It belongs to the fetuin family. As to expression, liver, lung and tongue.

It is found in the secreted. Protease inhibitor required for egg fertilization. Required to prevent premature zona pellucida hardening before fertilization, probably by inhibiting the protease activity of ASTL, a protease that mediates the cleavage of ZP2 and triggers zona pellucida hardening. This chain is Fetuin-B (Fetub), found in Mus musculus (Mouse).